The chain runs to 85 residues: Large ribosomal subunit protein bL27 (85 aa).

Positions methionine 1 to leucine 21 are disordered.

Belongs to the bacterial ribosomal protein bL27 family.

The polypeptide is Large ribosomal subunit protein bL27 (Porphyromonas gingivalis (strain ATCC 33277 / DSM 20709 / CIP 103683 / JCM 12257 / NCTC 11834 / 2561)).